Here is a 270-residue protein sequence, read N- to C-terminus: Interleukin-1 alpha (270 aa).

Positions 1–114 are excised as a propeptide; the sequence is MAKVPDLFED…HDLEETIQPR (114 aa). Residue Asn64 is glycosylated (N-linked (GlcNAc...) asparagine). Residue Lys85 is modified to N6-acetyllysine. The segment at 85–89 is nuclear localization signal (NLS); it reads KKRRL. Ser90 is modified (phosphoserine). N-linked (GlcNAc...) asparagine glycans are attached at residues Asn139 and Asn143.

It belongs to the IL-1 family. As to quaternary structure, monomer. Interacts with TMED10; the interaction mediates the translocation from the cytoplasm into the ERGIC (endoplasmic reticulum-Golgi intermediate compartment) and thereby secretion. Interacts with IL1R1. Interacts with S100A13; this interaction is the first step in the export of IL1A, followed by direct translocation of this complex across the plasma membrane. Post-translationally, acetylated within its nuclear localization sequence, which impacts subcellular localization. In terms of processing, proteolytic processed by CAPN1 in a calcium-dependent manner. Cleavage from 31 kDa precursor to 18 kDa biologically active molecules. Phosphorylated. Phosphorylation greatly enhances susceptibility to digestion and promotes the conversion of pre-IL1A alpha to the biologically active IL1A.

Its subcellular location is the nucleus. The protein localises to the cytoplasm. It localises to the secreted. Cytokine constitutively present intracellularly in nearly all resting non-hematopoietic cells that plays an important role in inflammation and bridges the innate and adaptive immune systems. After binding to its receptor IL1R1 together with its accessory protein IL1RAP, forms the high affinity interleukin-1 receptor complex. Signaling involves the recruitment of adapter molecules such as MYD88, IRAK1 or IRAK4. In turn, mediates the activation of NF-kappa-B and the three MAPK pathways p38, p42/p44 and JNK pathways. Within the cell, acts as an alarmin and cell death results in its liberation in the extracellular space after disruption of the cell membrane to induce inflammation and alert the host to injury or damage. In addition to its role as a danger signal, which occurs when the cytokine is passively released by cell necrosis, directly senses DNA damage and acts as a signal for genotoxic stress without loss of cell integrity. This is Interleukin-1 alpha from Mus musculus (Mouse).